The sequence spans 275 residues: MSSFSYRTLTVALFALICCPGSDEKVFEVHVRPKKLAVEPKGSLKVNCSTTCNQPEVGGLETSLDKILLDEQAQWKHYLVSNISHDTVLQCHFTCSGKQESMNSNVSVYQPPRQVILTLQPTLVAVGKSFTIECRVPTVEPLDSLTLFLFRGNETLHYETFGKAAPAPQEATVTFNSTADRDDGHRNFSCLAVLDLMSRGGNIFHKHSAPKMLEIYEPVSDSQMVIIVTVVSVLLSLFVTSVLLCFIFGQHLRQQRMGTYGVRAAWRRLPQAFRP.

Residues M1–E24 form the signal peptide. Topologically, residues K25–Q223 are extracellular. The Ig-like C2-type 1 domain occupies K41–K98. N-linked (GlcNAc...) asparagine glycosylation is found at N47, N82, N105, N153, N176, and N187. 2 cysteine pairs are disulfide-bonded: C48-C91 and C52-C95. An Ig-like C2-type 2 domain is found at G127 to M197. Cysteines 134 and 190 form a disulfide. The chain crosses the membrane as a helical span at residues M224–F248. Topologically, residues G249–P275 are cytoplasmic. The required for interaction with EZR, MSN and RDX and co-localization to microvilli stretch occupies residues H251–P275.

This sequence belongs to the immunoglobulin superfamily. ICAM family. As to quaternary structure, interacts with RDX, EZR and MSN.

It localises to the membrane. The protein localises to the cell projection. Its subcellular location is the microvillus. ICAM proteins are ligands for the leukocyte adhesion protein LFA-1 (integrin alpha-L/beta-2). ICAM2 may play a role in lymphocyte recirculation by blocking LFA-1-dependent cell adhesion. It mediates adhesive interactions important for antigen-specific immune response, NK-cell mediated clearance, lymphocyte recirculation, and other cellular interactions important for immune response and surveillance. This Pan troglodytes (Chimpanzee) protein is Intercellular adhesion molecule 2 (ICAM2).